A 555-amino-acid chain; its full sequence is GMP synthase [glutamine-hydrolyzing] (555 aa).

The Glutamine amidotransferase type-1 domain occupies 8–234; that stretch reads KILVLNFGSQ…AYNICKCKKQ (227 aa). Catalysis depends on Cys89, which acts as the Nucleophile; for GATase activity. Residues Gln93, Asn169, Asp172, and His208 each contribute to the L-glutamine site. Residues His208 and Glu210 each act as for GATase activity in the active site. One can recognise a GMPS ATP-PPase domain in the interval 235–430; that stretch reads FDPIRYHELE…LNLPEEITNR (196 aa). 262–268 is a binding site for ATP; it reads SGGIDST. XMP is bound by residues Arg336, Gln476, Lys547, Ile552, and Glu553.

In terms of assembly, homodimer (via the GMPS ATP-PPase domain). Mg(2+) serves as cofactor.

It carries out the reaction XMP + L-glutamine + ATP + H2O = GMP + L-glutamate + AMP + diphosphate + 2 H(+). It functions in the pathway purine metabolism; GMP biosynthesis; GMP from XMP (L-Gln route): step 1/1. Its activity is regulated as follows. The GATase domain is allosterically activated by the binding of substrates, ATP and XMP, to the ATPPase domain, thus ensuring that glutamine hydrolysis occurs only when the ATPPase domain is primed to receive ammonia. Inhibited by Na(+). Inhibited by the reaction product GMP. Functionally, catalyzes the conversion of xanthine monophosphate (XMP) to GMP in the presence of glutamine and ATP through an adenyl-XMP intermediate, which is the final step of de novo synthesis of GMP. The conversion of XMP to GMP involves the coordinated action of the glutamine amidotransferase (GATase) domain that catalyzes the hydrolysis of the amide side chain of glutamine producing ammonia and the ATP pyrophosphatase (ATPPase) domain that catalyzes the synthesis of adenyl-XMP intermediate from ATP. The ammonia produced by the GATase domain is tunnelled to the ATP-PPase domain where it attacks the adenyl-XMP intermediate generating GMP. In Plasmodium falciparum (isolate 3D7), this protein is GMP synthase [glutamine-hydrolyzing].